The chain runs to 372 residues: Histidinol-phosphate aminotransferase (372 aa).

Position 229 is an N6-(pyridoxal phosphate)lysine (lysine 229).

Belongs to the class-II pyridoxal-phosphate-dependent aminotransferase family. Histidinol-phosphate aminotransferase subfamily. Homodimer. Pyridoxal 5'-phosphate is required as a cofactor.

It catalyses the reaction L-histidinol phosphate + 2-oxoglutarate = 3-(imidazol-4-yl)-2-oxopropyl phosphate + L-glutamate. Its pathway is amino-acid biosynthesis; L-histidine biosynthesis; L-histidine from 5-phospho-alpha-D-ribose 1-diphosphate: step 7/9. The protein is Histidinol-phosphate aminotransferase of Bdellovibrio bacteriovorus (strain ATCC 15356 / DSM 50701 / NCIMB 9529 / HD100).